The chain runs to 106 residues: Urease subunit beta (106 aa).

This sequence belongs to the urease beta subunit family. As to quaternary structure, heterotrimer of UreA (gamma), UreB (beta) and UreC (alpha) subunits. Three heterotrimers associate to form the active enzyme.

It is found in the cytoplasm. It carries out the reaction urea + 2 H2O + H(+) = hydrogencarbonate + 2 NH4(+). It functions in the pathway nitrogen metabolism; urea degradation; CO(2) and NH(3) from urea (urease route): step 1/1. This chain is Urease subunit beta, found in Prochlorococcus marinus (strain MIT 9215).